A 155-amino-acid chain; its full sequence is uncharacterized protein (155 aa).

Residues 1–14 are compositionally biased toward polar residues; the sequence is MLTLSGWITTQVPP. Residues 1–44 are disordered; sequence MLTLSGWITTQVPPSSRAAADAKAARTGTAEQAEDPAAGTDAAD. Residues 17 to 30 are compositionally biased toward low complexity; sequence RAAADAKAARTGTA.

This is an uncharacterized protein from Pseudomonas aeruginosa (strain ATCC 15692 / DSM 22644 / CIP 104116 / JCM 14847 / LMG 12228 / 1C / PRS 101 / PAO1).